Consider the following 128-residue polypeptide: Azurin (128 aa).

Positions 1–128 (AECKVTVDST…AMMKGTVTLK (128 aa)) constitute a Plastocyanin-like domain. Cys-3 and Cys-26 form a disulfide bridge. Cu cation is bound by residues His-46, Cys-112, His-117, and Met-121.

The protein resides in the periplasm. In terms of biological role, transfers electrons from cytochrome c551 to cytochrome oxidase. This chain is Azurin, found in Pseudomonas fluorescens biotype C.